We begin with the raw amino-acid sequence, 772 residues long: Ribosomal protein S6 kinase alpha-4 (772 aa).

The Protein kinase 1 domain maps to 33-301 (FELLKVLGTG…AQEVRNHPFF (269 aa)). ATP contacts are provided by residues 39-47 (LGTGAYGKV) and Lys-65. Asp-161 functions as the Proton acceptor in the catalytic mechanism. Residue Ser-196 is modified to Phosphoserine; by autocatalysis. The AGC-kinase C-terminal domain maps to 302–371 (QGLDWVALAA…VAPSILFDHN (70 aa)). Ser-343 carries the post-translational modification Phosphoserine; by MAPK1, MAPK3 and MAPK14. At Ser-347 the chain carries Phosphoserine. Residues Ser-360 and Ser-365 each carry the phosphoserine; by autocatalysis modification. Positions 411 to 674 (DLREPALGQG…LEGLRGSSWL (264 aa)) constitute a Protein kinase 2 domain. Residues 417 to 425 (LGQGSFSVC) and Lys-440 each bind ATP. The active-site Proton acceptor is Asp-530. Thr-542 carries the phosphothreonine modification. Thr-568 is modified (phosphothreonine; by MAPK1, MAPK3 and MAPK14). 2 positions are modified to phosphoserine: Ser-634 and Ser-678. 2 disordered regions span residues 673 to 696 (WLQD…SSGP) and 728 to 772 (AKRR…LPPS). Thr-687 is modified (phosphothreonine). The required for nuclear targeting and association with MAPK14 stretch occupies residues 725-772 (APLAKRRKQKLRSATASRRGSPAPANPGRAPVASKGAPRRANGPLPPS). Ser-737 carries the post-translational modification Phosphoserine; by autocatalysis. Ser-745 bears the Phosphoserine mark.

This sequence belongs to the protein kinase superfamily. AGC Ser/Thr protein kinase family. S6 kinase subfamily. In terms of assembly, forms a complex with either MAPK1/ERK2 or MAPK3/ERK1 in quiescent cells which transiently dissociates following mitogenic stimulation. Also associates with MAPK14/p38-alpha. Activated RPS6KA4 associates with and phosphorylates the NF-kappa-B p65 subunit RELA. Mg(2+) is required as a cofactor. Post-translationally, ser-343 and Thr-568 phosphorylation is required for kinase activity. Ser-343 and Ser-196 are autophosphorylated by the C-terminal kinase domain, and their phosphorylation is essential for the catalytic activity of the N-terminal kinase domain. Phosphorylated at Ser-343, Thr-568 and Thr-687 by MAPK1/ERK2, MAPK3/ERK1 and MAPK14/p38-alpha. Autophosphorylated at Ser-737 and Ser-745 by the N-terminal kinase domain.

It localises to the nucleus. It carries out the reaction L-seryl-[protein] + ATP = O-phospho-L-seryl-[protein] + ADP + H(+). The catalysed reaction is L-threonyl-[protein] + ATP = O-phospho-L-threonyl-[protein] + ADP + H(+). With respect to regulation, activated by phosphorylation at Ser-343, Thr-568 and Thr-687 by MAPK1/ERK2, MAPK3/ERK1 and MAPK14/p38-alpha, and by further autophosphorylation of Ser-196, Ser-360 and Ser-365 by the activated C-terminal kinase domain. Its function is as follows. Serine/threonine-protein kinase that is required for the mitogen or stress-induced phosphorylation of the transcription factors CREB1 and ATF1 and for the regulation of the transcription factor RELA, and that contributes to gene activation by histone phosphorylation and functions in the regulation of inflammatory genes. Phosphorylates CREB1 and ATF1 in response to mitogenic or stress stimuli such as UV-C irradiation, epidermal growth factor (EGF) and anisomycin. Plays an essential role in the control of RELA transcriptional activity in response to TNF. Phosphorylates 'Ser-10' of histone H3 in response to mitogenics, stress stimuli and EGF, which results in the transcriptional activation of several immediate early genes, including proto-oncogenes c-fos/FOS and c-jun/JUN. May also phosphorylate 'Ser-28' of histone H3. Mediates the mitogen- and stress-induced phosphorylation of high mobility group protein 1 (HMGN1/HMG14). In lipopolysaccharide-stimulated primary macrophages, acts downstream of the Toll-like receptor TLR4 to limit the production of pro-inflammatory cytokines. Functions probably by inducing transcription of the MAP kinase phosphatase DUSP1 and the anti-inflammatory cytokine interleukin 10 (IL10), via CREB1 and ATF1 transcription factors. This Homo sapiens (Human) protein is Ribosomal protein S6 kinase alpha-4 (RPS6KA4).